We begin with the raw amino-acid sequence, 403 residues long: Argininosuccinate synthase (403 aa).

Residues 13–21 (AYSGGLDTS) and A40 contribute to the ATP site. L-citrulline-binding residues include Y91 and S96. G121 contributes to the ATP binding site. L-aspartate-binding residues include T123, N127, and D128. N127 provides a ligand contact to L-citrulline. L-citrulline is bound by residues R131, S180, S189, E265, and Y277.

This sequence belongs to the argininosuccinate synthase family. Type 1 subfamily. As to quaternary structure, homotetramer.

It localises to the cytoplasm. The catalysed reaction is L-citrulline + L-aspartate + ATP = 2-(N(omega)-L-arginino)succinate + AMP + diphosphate + H(+). The protein operates within amino-acid biosynthesis; L-arginine biosynthesis; L-arginine from L-ornithine and carbamoyl phosphate: step 2/3. This is Argininosuccinate synthase from Leptospira interrogans serogroup Icterohaemorrhagiae serovar copenhageni (strain Fiocruz L1-130).